Reading from the N-terminus, the 38-residue chain is CHH precursor-related peptide (38 aa).

The tract at residues 18 to 38 is disordered; the sequence is GALEPSTPLGDLSGSLGHPVE.

In terms of tissue distribution, produced by the medulla terminalis X-organ in the eyestalks and transported to the sinus gland where it is stored and released.

The protein resides in the secreted. This is CHH precursor-related peptide from Cancer pagurus (Rock crab).